We begin with the raw amino-acid sequence, 132 residues long: Phosphoribosyl-AMP cyclohydrolase (132 aa).

Mg(2+) is bound at residue aspartate 79. Position 80 (cysteine 80) interacts with Zn(2+). Aspartate 81 and aspartate 83 together coordinate Mg(2+). Zn(2+) contacts are provided by cysteine 100 and cysteine 107.

Belongs to the PRA-CH family. In terms of assembly, homodimer. The cofactor is Mg(2+). Zn(2+) is required as a cofactor.

It is found in the cytoplasm. It carries out the reaction 1-(5-phospho-beta-D-ribosyl)-5'-AMP + H2O = 1-(5-phospho-beta-D-ribosyl)-5-[(5-phospho-beta-D-ribosylamino)methylideneamino]imidazole-4-carboxamide. It functions in the pathway amino-acid biosynthesis; L-histidine biosynthesis; L-histidine from 5-phospho-alpha-D-ribose 1-diphosphate: step 3/9. Its function is as follows. Catalyzes the hydrolysis of the adenine ring of phosphoribosyl-AMP. This is Phosphoribosyl-AMP cyclohydrolase from Acidovorax ebreus (strain TPSY) (Diaphorobacter sp. (strain TPSY)).